Consider the following 304-residue polypeptide: Virulence protein VirA (304 aa).

In terms of biological role, could be involved in the biosynthesis of a major surface antigen important for virulence. This Vibrio anguillarum (strain ATCC 68554 / 775) (Listonella anguillarum) protein is Virulence protein VirA (virA).